Consider the following 252-residue polypeptide: Chaperone protein AggD (252 aa).

Positions 1 to 22 are cleaved as a signal peptide; it reads MKIRRIVSTIAIALSVFTFAHA.

The protein belongs to the periplasmic pilus chaperone family.

Its subcellular location is the periplasm. Functionally, involved in the biogenesis of the AAF/I fimbriae. This chain is Chaperone protein AggD (aggD), found in Escherichia coli.